Consider the following 373-residue polypeptide: Dual-specificity RNA methyltransferase RlmN (373 aa).

Catalysis depends on Glu94, which acts as the Proton acceptor. A Radical SAM core domain is found at 100-339 (EDDRATLCVS…VIVRKTRGDD (240 aa)). The cysteines at positions 107 and 344 are disulfide-linked. Cys114, Cys118, and Cys121 together coordinate [4Fe-4S] cluster. S-adenosyl-L-methionine contacts are provided by residues 168–169 (GE), Ser200, 222–224 (SIH), and Asn301. Cys344 serves as the catalytic S-methylcysteine intermediate.

Belongs to the radical SAM superfamily. RlmN family. It depends on [4Fe-4S] cluster as a cofactor.

The protein resides in the cytoplasm. It catalyses the reaction adenosine(2503) in 23S rRNA + 2 reduced [2Fe-2S]-[ferredoxin] + 2 S-adenosyl-L-methionine = 2-methyladenosine(2503) in 23S rRNA + 5'-deoxyadenosine + L-methionine + 2 oxidized [2Fe-2S]-[ferredoxin] + S-adenosyl-L-homocysteine. The catalysed reaction is adenosine(37) in tRNA + 2 reduced [2Fe-2S]-[ferredoxin] + 2 S-adenosyl-L-methionine = 2-methyladenosine(37) in tRNA + 5'-deoxyadenosine + L-methionine + 2 oxidized [2Fe-2S]-[ferredoxin] + S-adenosyl-L-homocysteine. Specifically methylates position 2 of adenine 2503 in 23S rRNA and position 2 of adenine 37 in tRNAs. m2A2503 modification seems to play a crucial role in the proofreading step occurring at the peptidyl transferase center and thus would serve to optimize ribosomal fidelity. The chain is Dual-specificity RNA methyltransferase RlmN from Shewanella sp. (strain W3-18-1).